A 406-amino-acid chain; its full sequence is Peptide antibiotic transporter SbmA (406 aa).

The Periplasmic portion of the chain corresponds to methionine 1–threonine 11. A helical membrane pass occupies residues phenylalanine 12–glycine 32. Residues aspartate 33–aspartate 56 lie on the Cytoplasmic side of the membrane. A helical transmembrane segment spans residues phenylalanine 57–isoleucine 77. Over tyrosine 78–serine 87 the chain is Periplasmic. The chain crosses the membrane as a helical span at residues isoleucine 88–valine 108. Over asparagine 109 to glutamate 137 the chain is Cytoplasmic. A helical transmembrane segment spans residues valine 138 to phenylalanine 158. The Periplasmic portion of the chain corresponds to valine 159–methionine 205. Residues glycine 206–leucine 226 form a helical membrane-spanning segment. At serine 227–glycine 242 the chain is on the cytoplasmic side. The chain crosses the membrane as a helical span at residues leucine 243–isoleucine 263. Over lysine 264–asparagine 331 the chain is Periplasmic. Residues valine 332–methionine 352 form a helical membrane-spanning segment. At threonine 353 to serine 406 the chain is on the cytoplasmic side.

Belongs to the peptide uptake permease (PUP) (TC 9.A.18) family.

Its subcellular location is the cell inner membrane. Its function is as follows. Uptake of antimicrobial peptides. This is Peptide antibiotic transporter SbmA (sbmA) from Escherichia coli O157:H7.